Consider the following 500-residue polypeptide: Phenylalanine--tRNA ligase alpha subunit (500 aa).

L-phenylalanine is bound by residues Thr-343, 382–384 (QVD), and Phe-423. Residue Glu-425 participates in Mg(2+) binding. Residue Phe-448 participates in L-phenylalanine binding.

Belongs to the class-II aminoacyl-tRNA synthetase family. Phe-tRNA synthetase alpha subunit type 2 subfamily. As to quaternary structure, tetramer of two alpha and two beta subunits. Requires Mg(2+) as cofactor.

The protein localises to the cytoplasm. The catalysed reaction is tRNA(Phe) + L-phenylalanine + ATP = L-phenylalanyl-tRNA(Phe) + AMP + diphosphate + H(+). The sequence is that of Phenylalanine--tRNA ligase alpha subunit from Thermococcus onnurineus (strain NA1).